The sequence spans 469 residues: Neuraminidase (469 aa).

At Met1–Lys6 the chain is on the intravirion side. A helical transmembrane segment spans residues Ile7–Leu29. The interval Gly11 to Val33 is involved in apical transport and lipid raft association. The Virion surface segment spans residues Ala30–Ile469. The segment at His36–Ser88 is hypervariable stalk region. Asn61, Asn69, Asn70, and Asn86 each carry an N-linked (GlcNAc...) asparagine; by host glycan. The tract at residues Gln91 to Ile469 is head of neuraminidase. Intrachain disulfides connect Cys92–Cys417, Cys124–Cys129, Cys183–Cys230, Cys232–Cys237, Cys278–Cys291, Cys280–Cys289, Cys318–Cys337, and Cys421–Cys447. Residue Arg118 participates in substrate binding. Asn146 carries an N-linked (GlcNAc...) asparagine; by host glycan. Residue Asp151 is the Proton donor/acceptor of the active site. Substrate is bound at residue Arg152. 2 N-linked (GlcNAc...) asparagine; by host glycosylation sites follow: Asn200 and Asn234. Glu276–Glu277 is a substrate binding site. Position 292 (Arg292) interacts with substrate. Residues Asp293, Gly297, and Asp324 each coordinate Ca(2+). The interval Thr325 to Val349 is disordered. Arg371 lines the substrate pocket. Asn402 carries N-linked (GlcNAc...) asparagine; by host glycosylation. Residue Tyr406 is the Nucleophile of the active site.

Belongs to the glycosyl hydrolase 34 family. Homotetramer. Ca(2+) serves as cofactor. Post-translationally, N-glycosylated.

Its subcellular location is the virion membrane. It localises to the host apical cell membrane. It carries out the reaction Hydrolysis of alpha-(2-&gt;3)-, alpha-(2-&gt;6)-, alpha-(2-&gt;8)- glycosidic linkages of terminal sialic acid residues in oligosaccharides, glycoproteins, glycolipids, colominic acid and synthetic substrates.. Inhibited by the neuraminidase inhibitors zanamivir (Relenza) and oseltamivir (Tamiflu). These drugs interfere with the release of progeny virus from infected cells and are effective against all influenza strains. Resistance to neuraminidase inhibitors is quite rare. Its function is as follows. Catalyzes the removal of terminal sialic acid residues from viral and cellular glycoconjugates. Cleaves off the terminal sialic acids on the glycosylated HA during virus budding to facilitate virus release. Additionally helps virus spread through the circulation by further removing sialic acids from the cell surface. These cleavages prevent self-aggregation and ensure the efficient spread of the progeny virus from cell to cell. Otherwise, infection would be limited to one round of replication. Described as a receptor-destroying enzyme because it cleaves a terminal sialic acid from the cellular receptors. May facilitate viral invasion of the upper airways by cleaving the sialic acid moieties on the mucin of the airway epithelial cells. Likely to plays a role in the budding process through its association with lipid rafts during intracellular transport. May additionally display a raft-association independent effect on budding. Plays a role in the determination of host range restriction on replication and virulence. Sialidase activity in late endosome/lysosome traffic seems to enhance virus replication. This Influenza A virus (strain A/Leningrad/134/17/1957 H2N2) protein is Neuraminidase.